A 37-amino-acid chain; its full sequence is Large ribosomal subunit protein bL36 (37 aa).

Belongs to the bacterial ribosomal protein bL36 family.

The chain is Large ribosomal subunit protein bL36 from Prochlorococcus marinus (strain MIT 9313).